A 918-amino-acid chain; its full sequence is Alpha-scruin (918 aa).

Kelch repeat units follow at residues 82-133 (VVLA…YFHR), 134-187 (RVYV…VMDE), 188-235 (RIFV…NNEG), 237-289 (IYVI…TQNK), 291-341 (IWIW…KTGA), and 342-390 (HVFI…AIPA). The interval 398-427 (EVPTSTPSSKAKPQPGSKPTSVKYKKQPDI) is disordered. An IQ domain is found at 430–459 (RNEAAKKVQRRWRRYIEQKSITKRMQQGDS). Kelch repeat units follow at residues 590–641 (VIIG…YYRS), 642–695 (AIYI…VFND), 696–743 (VLYA…AHGG), 745–795 (IWLL…VCDN), 797–849 (IWLC…ALES), and 851–898 (LYIA…TIPP).

Sperm.

Actin bundling protein found in the acrosomal sperm process. The protein is Alpha-scruin of Limulus polyphemus (Atlantic horseshoe crab).